Here is a 318-residue protein sequence, read N- to C-terminus: Bis(5'-nucleosyl)-tetraphosphatase, symmetrical (318 aa).

Residues 269-318 (PGREVTGPAPVARAPRRPRERLGRQRSRGNRGNAGNTAVPAKPQVDTPQD) are disordered. Residues 282–297 (APRRPRERLGRQRSRG) show a composition bias toward basic residues.

It belongs to the Ap4A hydrolase family.

It carries out the reaction P(1),P(4)-bis(5'-adenosyl) tetraphosphate + H2O = 2 ADP + 2 H(+). Its function is as follows. Hydrolyzes diadenosine 5',5'''-P1,P4-tetraphosphate to yield ADP. The chain is Bis(5'-nucleosyl)-tetraphosphatase, symmetrical from Xanthomonas oryzae pv. oryzae (strain KACC10331 / KXO85).